The primary structure comprises 314 residues: Mitochondrial RNA-splicing protein MRS3 (314 aa).

3 Solcar repeats span residues 31 to 118 (APLY…CKKN), 128 to 210 (HHPF…STKF), and 217 to 310 (YNPL…AKHF). Helical transmembrane passes span 33–52 (LYHQLIAGAFAGIMEHSVMF), 93–112 (GVQSVILGAGPAHAVYFGTY), 130–149 (PFKTAISGACATTASDALMN), 185–204 (SYPTTLVMNIPFAAFNFVIY), 219–238 (PLIHCLCGSISGSTCAAITT), and 285–298 (GWKPRIVANMPATA).

This sequence belongs to the mitochondrial carrier (TC 2.A.29) family.

It localises to the mitochondrion inner membrane. Functionally, MRS3 suppresses a mitochondrial splice defect in the first intron of the COB gene. It may act as a carrier, exerting its suppressor activity via modulation of solute concentrations in the mitochondrion (possibly of cations). This chain is Mitochondrial RNA-splicing protein MRS3 (MRS3), found in Saccharomyces cerevisiae (strain ATCC 204508 / S288c) (Baker's yeast).